A 290-amino-acid polypeptide reads, in one-letter code: tRNA-cytidine(32) 2-sulfurtransferase (290 aa).

A PP-loop motif motif is present at residues Ser-36–Ser-41. Positions 111, 114, and 202 each coordinate [4Fe-4S] cluster. The segment at Asp-259–Arg-290 is disordered. Acidic residues predominate over residues Leu-262–Gly-273.

Belongs to the TtcA family. In terms of assembly, homodimer. Mg(2+) serves as cofactor. [4Fe-4S] cluster is required as a cofactor.

The protein localises to the cytoplasm. The catalysed reaction is cytidine(32) in tRNA + S-sulfanyl-L-cysteinyl-[cysteine desulfurase] + AH2 + ATP = 2-thiocytidine(32) in tRNA + L-cysteinyl-[cysteine desulfurase] + A + AMP + diphosphate + H(+). Its pathway is tRNA modification. In terms of biological role, catalyzes the ATP-dependent 2-thiolation of cytidine in position 32 of tRNA, to form 2-thiocytidine (s(2)C32). The sulfur atoms are provided by the cysteine/cysteine desulfurase (IscS) system. In Anaeromyxobacter dehalogenans (strain 2CP-C), this protein is tRNA-cytidine(32) 2-sulfurtransferase.